We begin with the raw amino-acid sequence, 72 residues long: DNA-directed RNA polymerase subunit Rpo10 (72 aa).

4 residues coordinate Zn(2+): cysteine 7, cysteine 10, cysteine 53, and cysteine 54.

The protein belongs to the archaeal Rpo10/eukaryotic RPB10 RNA polymerase subunit family. As to quaternary structure, part of the RNA polymerase complex. It depends on Zn(2+) as a cofactor.

The protein resides in the cytoplasm. It catalyses the reaction RNA(n) + a ribonucleoside 5'-triphosphate = RNA(n+1) + diphosphate. In terms of biological role, DNA-dependent RNA polymerase (RNAP) catalyzes the transcription of DNA into RNA using the four ribonucleoside triphosphates as substrates. The protein is DNA-directed RNA polymerase subunit Rpo10 of Thermoplasma acidophilum (strain ATCC 25905 / DSM 1728 / JCM 9062 / NBRC 15155 / AMRC-C165).